The chain runs to 196 residues: MALVPMVIEQTNRGERAYDIYSRLLRDNIIFLGTPIDDQIANLVIAQLLFLSAEDPDKDIQLYINSPGGSITAGLAIYDTMQFIKNDVVTYCIGQAASMGAFLLMSGTAGKRFALPNSRILIHQPSMGGLSGQATDIDIHAREILRIREITNNLMSKHTGQSLERIERDVERDFIMNAPQAKEYGIIDEIIDRPRV.

The active-site Nucleophile is serine 98. Residue histidine 123 is part of the active site.

The protein belongs to the peptidase S14 family. In terms of assembly, fourteen ClpP subunits assemble into 2 heptameric rings which stack back to back to give a disk-like structure with a central cavity, resembling the structure of eukaryotic proteasomes.

It localises to the cytoplasm. It carries out the reaction Hydrolysis of proteins to small peptides in the presence of ATP and magnesium. alpha-casein is the usual test substrate. In the absence of ATP, only oligopeptides shorter than five residues are hydrolyzed (such as succinyl-Leu-Tyr-|-NHMec, and Leu-Tyr-Leu-|-Tyr-Trp, in which cleavage of the -Tyr-|-Leu- and -Tyr-|-Trp bonds also occurs).. Its function is as follows. Cleaves peptides in various proteins in a process that requires ATP hydrolysis. Has a chymotrypsin-like activity. Plays a major role in the degradation of misfolded proteins. The protein is ATP-dependent Clp protease proteolytic subunit of Acidobacterium capsulatum (strain ATCC 51196 / DSM 11244 / BCRC 80197 / JCM 7670 / NBRC 15755 / NCIMB 13165 / 161).